A 316-amino-acid chain; its full sequence is Dof zinc finger protein DOF5.7 (316 aa).

A disordered region spans residues 1 to 42 (MSSHTNLPSPKPVPKPDHRISGTSQTKKPPSSSVAQDQQNLK). Polar residues predominate over residues 21–42 (SGTSQTKKPPSSSVAQDQQNLK). The Dof-type zinc-finger motif lies at 41 to 95 (LKCPRCNSPNTKFCYYNNYSLSQPRHFCKSCRRYWTRGGALRNVPIGGGCRKTKK). Residues Cys-43, Cys-46, Cys-68, and Cys-71 each coordinate Zn(2+). Disordered regions lie at residues 92–111 (KTKK…SSSS) and 257–294 (NSSS…NTGG). Residues 101–111 (SSMNTLPSSSS) show a composition bias toward low complexity. Residues 257–291 (NSSSPSSPTKKGDNQTEWYFGNNSDNEGVISNNAN) are compositionally biased toward polar residues.

The protein resides in the nucleus. Its function is as follows. Transcription factor that binds specifically to a 5'-AA[AG]G-3' consensus core sequence. In Arabidopsis thaliana (Mouse-ear cress), this protein is Dof zinc finger protein DOF5.7 (DOF5.7).